The chain runs to 283 residues: Large ribosomal subunit protein mL46 (283 aa).

At lysine 217 the chain carries N6-succinyllysine. Lysine 228 is subject to N6-acetyllysine. Lysine 246 bears the N6-succinyllysine mark.

Belongs to the mitochondrion-specific ribosomal protein mL46 family. As to quaternary structure, component of the mitochondrial ribosome large subunit (39S) which comprises a 16S rRNA and about 50 distinct proteins.

Its subcellular location is the mitochondrion. In Mus musculus (Mouse), this protein is Large ribosomal subunit protein mL46 (Mrpl46).